Consider the following 341-residue polypeptide: tRNA N6-adenosine threonylcarbamoyltransferase (341 aa).

Residues His111 and His115 each coordinate Fe cation. Substrate contacts are provided by residues 134–138 (LVSGG), Asp167, Gly180, and Asn276. Asp304 contributes to the Fe cation binding site.

The protein belongs to the KAE1 / TsaD family. Fe(2+) is required as a cofactor.

Its subcellular location is the cytoplasm. The catalysed reaction is L-threonylcarbamoyladenylate + adenosine(37) in tRNA = N(6)-L-threonylcarbamoyladenosine(37) in tRNA + AMP + H(+). Its function is as follows. Required for the formation of a threonylcarbamoyl group on adenosine at position 37 (t(6)A37) in tRNAs that read codons beginning with adenine. Is involved in the transfer of the threonylcarbamoyl moiety of threonylcarbamoyl-AMP (TC-AMP) to the N6 group of A37, together with TsaE and TsaB. TsaD likely plays a direct catalytic role in this reaction. In Alteromonas mediterranea (strain DSM 17117 / CIP 110805 / LMG 28347 / Deep ecotype), this protein is tRNA N6-adenosine threonylcarbamoyltransferase.